The primary structure comprises 473 residues: Photosystem II CP43 reaction center protein (473 aa).

The propeptide occupies methionine 1–glutamate 14. At threonine 15 the chain carries N-acetylthreonine. Phosphothreonine is present on threonine 15. 5 consecutive transmembrane segments (helical) span residues leucine 69 to alanine 93, leucine 134 to asparagine 155, lysine 178 to threonine 200, lysine 255 to serine 275, and tryptophan 291 to alanine 312. Residue glutamate 367 participates in [CaMn4O5] cluster binding. The helical transmembrane segment at arginine 447–proline 471 threads the bilayer.

It belongs to the PsbB/PsbC family. PsbC subfamily. PSII is composed of 1 copy each of membrane proteins PsbA, PsbB, PsbC, PsbD, PsbE, PsbF, PsbH, PsbI, PsbJ, PsbK, PsbL, PsbM, PsbT, PsbX, PsbY, PsbZ, Psb30/Ycf12, at least 3 peripheral proteins of the oxygen-evolving complex and a large number of cofactors. It forms dimeric complexes. Requires Binds multiple chlorophylls and provides some of the ligands for the Ca-4Mn-5O cluster of the oxygen-evolving complex. It may also provide a ligand for a Cl- that is required for oxygen evolution. PSII binds additional chlorophylls, carotenoids and specific lipids. as cofactor.

It localises to the plastid. It is found in the chloroplast thylakoid membrane. Its function is as follows. One of the components of the core complex of photosystem II (PSII). It binds chlorophyll and helps catalyze the primary light-induced photochemical processes of PSII. PSII is a light-driven water:plastoquinone oxidoreductase, using light energy to abstract electrons from H(2)O, generating O(2) and a proton gradient subsequently used for ATP formation. This chain is Photosystem II CP43 reaction center protein, found in Helianthus annuus (Common sunflower).